The primary structure comprises 801 residues: MNAPVTYSASCEQVIPELVNEACERIAPIWPLDRWIAVNPWWGSRTGPVEKVSRELDNLFGAGLLMPPAFYREAWDGGRIQRPHLEEAAREAGLKDDSQALLAQLSGAASNQPGFVSALGYTRRGQQEPPLEEVREEIGRACARYFDLRQNRWRVSGTKQDLYQFWLSQSGRSLARKASVEMLLKPDWQEAAATVARELPYSSRQLPLVIHHLLGHLLGWASWCRGVDWRAALGDPHESGTEHFCAQLATIWLIHEAHALINMTEAERESWQNRYVNAFDLAPASANEQALWIWHRAYELAWQSRFLDDIRSSERSSLAEPDPVAEVQAAFCIDVRSEVIRRQLEKVYPEIRTLGVAGFFGMPIVHHRHGPTDDEARLPGLLAPVYRYSETLGSPSEDRELDRKLDSREQVRESVRRAKYSSLSTFTLVETTGLAWAWKLVRDSLNRNSAKAEAVEPGRLHHCVDGYPLSDPERVNLAEGLLRAMSLTKGFASVLLLVGHGAHTDNNPNEAGLACGACGGKNGGVNARVAAELLNDRQVRAGLAERGIVMPESTIALAAEHCTITDRITIYGRDQVPDSHQRVFNTLVEKLEAAGQACRRERATSLGLNGKTDDDLLAELKRRTRNWAEVRPEWGLANNAGMVIGPRSLTRSLDLGGRCFLHDYDPSQDPSGEVLTLLMSAPMVVANWINLQYFGSVARPDIFGAGNKLLHSVVGGNLGVVEGNGVDLKIGLPLQSVFDGEHWRHEPMRLAVVVDAPAERIEAVIRGNADVRALVENRWLWLHRVEGDQTLRYDDGRWVTT.

Residues C332, D334, H500, and C515 each coordinate Zn(2+).

This sequence belongs to the inorganic carbon transporter (TC 9.A.2) DabA family. As to quaternary structure, forms a complex with DabB. Zn(2+) serves as cofactor.

It localises to the cell inner membrane. Its function is as follows. Part of an energy-coupled inorganic carbon pump. The sequence is that of Probable inorganic carbon transporter subunit DabA from Marinobacter nauticus (strain ATCC 700491 / DSM 11845 / VT8) (Marinobacter aquaeolei).